The sequence spans 418 residues: Delta(14)-sterol reductase TM7SF2 (418 aa).

A run of 6 helical transmembrane segments spans residues 13-35 (FGGP…HLLL), 62-81 (ALLL…LLPA), 102-124 (GFQA…LPLS), 129-148 (MLLP…SLLL), 255-277 (FGFM…QAQF), and 287-304 (WPLA…YYIF). Residues Lys311, Arg315, Leu338, Trp343, and 350–351 (NY) contribute to the NADP(+) site. The helical transmembrane segment at 355-377 (LIMALAWSLPCGVFHLLPYFYFL) threads the bilayer. NADP(+) is bound by residues Asp390, 394 to 398 (CRQKY), and Tyr405.

Belongs to the ERG4/ERG24 family. Highly expressed in liver and brain.

The protein resides in the microsome membrane. It is found in the endoplasmic reticulum membrane. The catalysed reaction is 4,4-dimethyl-5alpha-cholesta-8,24-dien-3beta-ol + NADP(+) = 4,4-dimethyl-5alpha-cholesta-8,14,24-trien-3beta-ol + NADPH + H(+). The enzyme catalyses 5alpha-cholest-8,14-dien-3beta-ol + NADPH + H(+) = 5alpha-cholest-8-en-3beta-ol + NADP(+). It catalyses the reaction 4,4-dimethyl-8,14-cholestadien-3beta-ol + NADPH + H(+) = 4,4-dimethyl-5alpha-cholest-8-en-3beta-ol + NADP(+). It participates in steroid biosynthesis; cholesterol biosynthesis. Its function is as follows. Catalyzes the reduction of the C14-unsaturated bond of lanosterol, as part of the metabolic pathway leading to cholesterol biosynthesis. The polypeptide is Delta(14)-sterol reductase TM7SF2 (TM7SF2) (Bos taurus (Bovine)).